We begin with the raw amino-acid sequence, 263 residues long: Endonuclease 8 (263 aa).

P2 functions as the Schiff-base intermediate with DNA in the catalytic mechanism. The Proton donor role is filled by E3. K53 serves as the catalytic Proton donor; for beta-elimination activity. DNA contacts are provided by Q70, R125, and N169. The segment at 229–263 (KVFHRDGEACERCGGIIEKTTLSSRPFYWCPHCQK) adopts an FPG-type zinc-finger fold. R253 functions as the Proton donor; for delta-elimination activity in the catalytic mechanism.

Belongs to the FPG family. Zn(2+) serves as cofactor.

It carries out the reaction 2'-deoxyribonucleotide-(2'-deoxyribose 5'-phosphate)-2'-deoxyribonucleotide-DNA = a 3'-end 2'-deoxyribonucleotide-(2,3-dehydro-2,3-deoxyribose 5'-phosphate)-DNA + a 5'-end 5'-phospho-2'-deoxyribonucleoside-DNA + H(+). Involved in base excision repair of DNA damaged by oxidation or by mutagenic agents. Acts as a DNA glycosylase that recognizes and removes damaged bases. Has a preference for oxidized pyrimidines, such as thymine glycol, 5,6-dihydrouracil and 5,6-dihydrothymine. Has AP (apurinic/apyrimidinic) lyase activity and introduces nicks in the DNA strand. Cleaves the DNA backbone by beta-delta elimination to generate a single-strand break at the site of the removed base with both 3'- and 5'-phosphates. This chain is Endonuclease 8, found in Salmonella dublin (strain CT_02021853).